The primary structure comprises 305 residues: RNA-binding protein rnp-1 (305 aa).

In terms of domain architecture, RRM spans Ser3 to Ser72. The CCHC-type zinc finger occupies Cys84–Cys97. The tract at residues Gln284–Tyr305 is disordered. Residues Ala296 to Tyr305 are compositionally biased toward pro residues.

In terms of tissue distribution, expressed throughout the germline.

Functionally, RNA-binding protein that is required for the germ line to transition from spermatogenesis to oogenesis and allow for normal oocyte development. The protein is RNA-binding protein rnp-1 of Caenorhabditis elegans.